A 180-amino-acid chain; its full sequence is Shikimate kinase (180 aa).

Residue 14 to 19 coordinates ATP; it reads GAGKST. Serine 18 is a Mg(2+) binding site. Positions 36, 60, and 82 each coordinate substrate. Arginine 120 provides a ligand contact to ATP. Arginine 140 serves as a coordination point for substrate. Glutamine 157 serves as a coordination point for ATP.

It belongs to the shikimate kinase family. In terms of assembly, monomer. Mg(2+) serves as cofactor.

It is found in the cytoplasm. It carries out the reaction shikimate + ATP = 3-phosphoshikimate + ADP + H(+). Its pathway is metabolic intermediate biosynthesis; chorismate biosynthesis; chorismate from D-erythrose 4-phosphate and phosphoenolpyruvate: step 5/7. Catalyzes the specific phosphorylation of the 3-hydroxyl group of shikimic acid using ATP as a cosubstrate. The protein is Shikimate kinase of Haemophilus influenzae (strain PittEE).